Consider the following 381-residue polypeptide: Alkanesulfonate monooxygenase (381 aa).

The protein belongs to the SsuD family. As to quaternary structure, homotetramer.

It carries out the reaction an alkanesulfonate + FMNH2 + O2 = an aldehyde + FMN + sulfite + H2O + 2 H(+). Functionally, catalyzes the desulfonation of aliphatic sulfonates. This Enterobacter sp. (strain 638) protein is Alkanesulfonate monooxygenase.